A 647-amino-acid polypeptide reads, in one-letter code: MFSLRALSGVVTRSLVRAPHRRTMSHAARLLPHRVPQKKGPERDPSTLSNYEHFKPTNTTVCLKVDWTDQKLAGSVTYDLTVENSPKNLVLDTSYLDIQEVQVNGHKADFSIGERHNIFGSPLTITLPPNSGDKLQVKIAYSTTPSCTALQWLTPEQTAGKKAPYFFSQCQAIHARSVMPAFDTPSVKSTFDIEIESDHPVVASGLPIKSSNDTGKFVFRQKVPIPAYLFALAGGDLDSAPIGPRSDVYSEPCDLHKCQYEFEADTEKFINAAENIVFPYEWEKYDVLVLPPSFPYGGMENPNITFATPTLVSGDRQNVDVIAHELAHSWSGNLVTNCSWEHFWLNEGWTVYLERRIVGALEGEQQRHFSAIIGWNALEESVKLMSRDPVQESYTQLVVDLKPNGGADPDDAFSSVPYEKGSTFLFFLETEIGQAKFDPFVKHYFKHFRYKSLDTYQFIDCLFDFYANDKEVTDKLNAIDWEKTLFAPGLPNKPKFDTTLADECYSLASRWKDASDASAFSAKDIASFNSSQMVVFLITLSEYEGKDGFSWANKKELISNMGDIYSLANSSNPEVIAKWYSIAILAKVESEYPKLADWLATVGRMKFVRPGYRALNSVDPKLAKETFEKNKDFYHPICRDMVSKDLQ.

Substrate is bound by residues Q169 to Q171 and P295 to E300. Zn(2+) is bound at residue H324. E325 functions as the Proton acceptor in the catalytic mechanism. Positions 328 and 347 each coordinate Zn(2+). The active-site Proton donor is Y418.

Belongs to the peptidase M1 family. The cofactor is Zn(2+).

The protein localises to the cytoplasm. The protein resides in the nucleus. The catalysed reaction is an epoxide + H2O = an ethanediol. Functionally, aminopeptidase that preferentially cleaves di- and tripeptides. Also has low epoxide hydrolase activity (in vitro). Can hydrolyze the epoxide leukotriene LTA(4) but it forms preferentially 5,6-dihydroxy-7,9,11,14-eicosatetraenoic acid rather than the cytokine leukotriene B(4) as the product compared to the homologous mammalian enzyme (in vitro). The protein is Leucine aminopeptidase 2 of Yarrowia lipolytica (strain CLIB 122 / E 150) (Yeast).